The chain runs to 341 residues: THO complex subunit 6 (341 aa).

WD repeat units follow at residues 22–61, 74–112, 124–165, 166–205, 215–254, 256–293, and 295–339; these read RLHM…SSEA, AHDG…GCKE, LEVP…RVLR, GHTD…EVQT, SRPH…PTTI, PIRA…KAQV, and GSSP…AFSL. S180 is modified (phosphoserine).

This sequence belongs to the WD repeat THOC6 family. As to quaternary structure, component of the THO subcomplex, which is composed of THOC1, THOC2, THOC3, THOC5, THOC6 and THOC7. The THO subcomplex interacts with DDX39B to form the THO-DDX39B complex which multimerizes into a 28-subunit tetrameric assembly. Component of the transcription/export (TREX) complex at least composed of ALYREF/THOC4, DDX39B, SARNP/CIP29, CHTOP and the THO subcomplex; in the complex interacts with THOC5; together with THOC5 and THOC7, plays a key structural role in the oligomerization of the THO-DDX39B complex. TREX seems to have a dynamic structure involving ATP-dependent remodeling.

It localises to the nucleus. It is found in the nucleus speckle. Its function is as follows. Component of the THO subcomplex of the TREX complex which is thought to couple mRNA transcription, processing and nuclear export, and which specifically associates with spliced mRNA and not with unspliced pre-mRNA. Plays a key structural role in the oligomerization of the THO-DDX39B complex. TREX is recruited to spliced mRNAs by a transcription-independent mechanism, binds to mRNA upstream of the exon-junction complex (EJC) and is recruited in a splicing- and cap-dependent manner to a region near the 5' end of the mRNA where it functions in mRNA export to the cytoplasm via the TAP/NXF1 pathway. Plays a role in apoptosis negative control involved in brain development. In terms of biological role, (Microbial infection) The TREX complex is essential for the export of Kaposi's sarcoma-associated herpesvirus (KSHV) intronless mRNAs and infectious virus production. This is THO complex subunit 6 (THOC6) from Homo sapiens (Human).